Consider the following 61-residue polypeptide: Defensin BmKDfsin2 (61 aa).

Residues 1–24 (METIVLLFLLALVFCTLEMGMVEA) form the signal peptide. 3 disulfides stabilise this stretch: C28–C49, C35–C57, and C39–C59.

Belongs to the invertebrate defensin family. Type 2 subfamily. Highly expressed in non-venom gland (hemolymph) and moderately expressed in venom gland.

The protein localises to the secreted. Antibacterial peptide active against Gram-positive bacteria, but not on Gram-negative bacteria. Also has weak blocking activity on Kv1.1/KCNA1, Kv1.2/KCNA2, Kv1.3/KCNA3, KCa3.1/KCNN4/IK, KCa2.3/KCNN3/SK3 and Kv11.1/KCNH2/ERG1 channels (tested at 1 uM). It inhibits potassium channel current by interacting with the pore region. The polypeptide is Defensin BmKDfsin2 (Olivierus martensii (Manchurian scorpion)).